We begin with the raw amino-acid sequence, 574 residues long: Sulfate adenylyltransferase (574 aa).

The tract at residues 1-170 (MANPPHGGVL…VEAIDRLEHY (170 aa)) is N-terminal. The catalytic stretch occupies residues 171–395 (DYVGLRYTPA…LRESHPPRNQ (225 aa)). A sulfate-binding site is contributed by Gln198. Residues 198–201 (QTRN) and 292–295 (GRDH) contribute to the ATP site. Active-site residues include Thr199, Arg200, and Asn201. Sulfate is bound at residue Arg200. Ala296 contacts sulfate. Met334 lines the ATP pocket. Residues 396–574 (QGFTVFLTGY…LESQGLLTQL (179 aa)) form an allosteric regulation domain; adenylyl-sulfate kinase-like region. Residues 435-438 (ETVR), Arg452, 478-479 (IA), and Arg516 contribute to the 3'-phosphoadenylyl sulfate site.

The protein in the N-terminal section; belongs to the sulfate adenylyltransferase family. This sequence in the C-terminal section; belongs to the APS kinase family. In terms of assembly, homohexamer. Dimer of trimers.

Its subcellular location is the cytoplasm. It carries out the reaction sulfate + ATP + H(+) = adenosine 5'-phosphosulfate + diphosphate. The protein operates within sulfur metabolism; hydrogen sulfide biosynthesis; sulfite from sulfate: step 1/3. Allosterically inhibited by 3'-phosphoadenosine 5'-phosphosulfate (PAPS). Functionally, catalyzes the first intracellular reaction of sulfate assimilation, forming adenosine-5'-phosphosulfate (APS) from inorganic sulfate and ATP. Plays an important role in sulfate activation as a component of the biosynthesis pathway of sulfur-containing amino acids. This chain is Sulfate adenylyltransferase, found in Phaeosphaeria nodorum (strain SN15 / ATCC MYA-4574 / FGSC 10173) (Glume blotch fungus).